A 481-amino-acid polypeptide reads, in one-letter code: Pre-mRNA-splicing factor sap114 (481 aa).

The segment covering 1-15 has biased composition (polar residues); it reads MSSLMEFQDRNTTNN. Positions 1–34 are disordered; the sequence is MSSLMEFQDRNTTNNETEHQKSITDQSSSVPAGV. SURP motif repeat units follow at residues 44 to 86 and 147 to 189; these read IIDK…HPYY and VLRL…YPYF. 2 disordered regions span residues 335-373 and 452-481; these read PSLASPEKGGISSTTSVSPAAQASPVLSTTTQPKVQKPV and GVEISQEEIERRKRAATQSAWGATPTNKRR. Composition is skewed to polar residues over residues 345–368 and 467–481; these read ISSTTSVSPAAQASPVLSTTTQPK and ATQSAWGATPTNKRR.

In terms of assembly, belongs to the 40S cdc5-associated complex (or cwf complex), a spliceosome sub-complex reminiscent of a late-stage spliceosome composed of the U2, U5 and U6 snRNAs and at least brr2, cdc5, cwf2/prp3, cwf3/syf1, cwf4/syf3, cwf5/ecm2, spp42/cwf6, cwf7/spf27, cwf8, cwf9, cwf10, cwf11, cwf12, prp45/cwf13, cwf14, cwf15, cwf16, cwf17, cwf18, cwf19, cwf20, cwf21, cwf22, cwf23, cwf24, cwf25, cwf26, cyp7/cwf27, cwf28, cwf29/ist3, lea1, msl1, prp5/cwf1, prp10, prp12/sap130, prp17, prp22, sap61, sap62, sap114, sap145, slu7, smb1, smd1, smd3, smf1, smg1 and syf2.

Its subcellular location is the nucleus. Functionally, involved in pre-mRNA splicing. May be involved in endoplasmic reticulum-associated protein degradation (ERAD) and required for growth at low and high temperatures. The polypeptide is Pre-mRNA-splicing factor sap114 (sap114) (Schizosaccharomyces pombe (strain 972 / ATCC 24843) (Fission yeast)).